Consider the following 146-residue polypeptide: Hemoglobin subunit beta-2 (146 aa).

One can recognise a Globin domain in the interval 2–146 (FLSAEEKGLV…VASALAHRYH (145 aa)). K17 carries the N6-succinyllysine modification. Residues S44 and S50 each carry the phosphoserine modification. K59 carries the post-translational modification N6-succinyllysine. 2 residues coordinate heme b: H63 and H92. R104 carries the post-translational modification Asymmetric dimethylarginine.

It belongs to the globin family. Heterotetramer of two alpha chains and two beta chains. As to expression, red blood cells.

In terms of biological role, involved in oxygen transport from the lung to the various peripheral tissues. The protein is Hemoglobin subunit beta-2 (HBB2) of Panthera pardus saxicolor (Northern Persian leopard).